Consider the following 170-residue polypeptide: Guided entry of tail-anchored proteins factor 1 (170 aa).

The Lumenal segment spans residues 1–6 (MAAGFN). A helical membrane pass occupies residues 7 to 27 (WFLVLSSVFLCNLVKTFLPSI). Topologically, residues 28–96 (SSFLSKIFHK…KSRTAQQAKM (69 aa)) are cytoplasmic. The segment at 35–93 (FHKDADQEMEMRTEIQNMKMELSTISMMDEFARYARLERKINKMTDQLKTLVKSRTAQQ) is interaction with GET3/TRC40. Positions 61 to 91 (MMDEFARYARLERKINKMTDQLKTLVKSRTA) form a coiled coil. The chain crosses the membrane as a helical span at residues 97 to 117 (KWIVNIAFYILQAALMISLIL). Residues 118–137 (KYYADPVTVVPSKWIAPLER) lie on the Lumenal side of the membrane. A helical membrane pass occupies residues 138-158 (LVAFPSGVAGGVGITCWLVVC). At 159–170 (NKVVALILQAVS) the chain is on the cytoplasmic side.

It belongs to the WRB/GET1 family. Component of the Golgi to ER traffic (GET) complex, which is composed of GET1/WRB, CAMLG/GET2 and GET3/TRC40. Within the complex, GET1 and CAMLG form a heterotetramer which is stabilized by phosphatidylinositol binding and which binds to the GET3 homodimer.

It localises to the endoplasmic reticulum membrane. Its function is as follows. Required for the post-translational delivery of tail-anchored (TA) proteins to the endoplasmic reticulum (ER). Together with CAMLG/GET2, acts as a membrane receptor for soluble GET3/TRC40, which recognizes and selectively binds the transmembrane domain of TA proteins in the cytosol. Required to ensure correct topology and ER insertion of CAMLG. This is Guided entry of tail-anchored proteins factor 1 from Danio rerio (Zebrafish).